We begin with the raw amino-acid sequence, 301 residues long: Ribonuclease Z (301 aa).

7 residues coordinate Zn(2+): H60, H62, D64, H65, H137, D207, and H265. The active-site Proton acceptor is D64.

The protein belongs to the RNase Z family. As to quaternary structure, homodimer. The cofactor is Zn(2+).

The enzyme catalyses Endonucleolytic cleavage of RNA, removing extra 3' nucleotides from tRNA precursor, generating 3' termini of tRNAs. A 3'-hydroxy group is left at the tRNA terminus and a 5'-phosphoryl group is left at the trailer molecule.. Zinc phosphodiesterase, which displays some tRNA 3'-processing endonuclease activity. Probably involved in tRNA maturation, by removing a 3'-trailer from precursor tRNA. The chain is Ribonuclease Z from Exiguobacterium sibiricum (strain DSM 17290 / CCUG 55495 / CIP 109462 / JCM 13490 / 255-15).